Reading from the N-terminus, the 197-residue chain is Nucleoid occlusion factor SlmA (197 aa).

In terms of domain architecture, HTH tetR-type spans isoleucine 7–leucine 67. Residues threonine 30–phenylalanine 49 constitute a DNA-binding region (H-T-H motif). The stretch at alanine 110–glutamate 130 forms a coiled coil.

This sequence belongs to the nucleoid occlusion factor SlmA family. In terms of assembly, homodimer. Interacts with FtsZ.

The protein localises to the cytoplasm. It localises to the nucleoid. Its function is as follows. Required for nucleoid occlusion (NO) phenomenon, which prevents Z-ring formation and cell division over the nucleoid. Acts as a DNA-associated cell division inhibitor that binds simultaneously chromosomal DNA and FtsZ, and disrupts the assembly of FtsZ polymers. SlmA-DNA-binding sequences (SBS) are dispersed on non-Ter regions of the chromosome, preventing FtsZ polymerization at these regions. The chain is Nucleoid occlusion factor SlmA from Shewanella sp. (strain W3-18-1).